Reading from the N-terminus, the 596-residue chain is Elongation factor 4 (596 aa).

One can recognise a tr-type G domain in the interval 2 to 184; it reads RNIRNFSIIA…AIVHRIPPPT (183 aa). Residues 14-19 and 131-134 each bind GTP; these read DHGKST and NKID.

This sequence belongs to the TRAFAC class translation factor GTPase superfamily. Classic translation factor GTPase family. LepA subfamily.

Its subcellular location is the cell inner membrane. It carries out the reaction GTP + H2O = GDP + phosphate + H(+). Its function is as follows. Required for accurate and efficient protein synthesis under certain stress conditions. May act as a fidelity factor of the translation reaction, by catalyzing a one-codon backward translocation of tRNAs on improperly translocated ribosomes. Back-translocation proceeds from a post-translocation (POST) complex to a pre-translocation (PRE) complex, thus giving elongation factor G a second chance to translocate the tRNAs correctly. Binds to ribosomes in a GTP-dependent manner. The polypeptide is Elongation factor 4 (Xanthomonas oryzae pv. oryzae (strain PXO99A)).